A 244-amino-acid polypeptide reads, in one-letter code: Lymphotoxin-beta (244 aa).

Over 1–18 (MGALGLEGRGGRLQGRGS) the chain is Cytoplasmic. Residues 19 to 48 (LLLAVAGATSLVTLLLAVPITVLAVLALVP) traverse the membrane as a helical; Signal-anchor for type II membrane protein segment. The Extracellular segment spans residues 49–244 (QDQGGLVTDT…KTFFGAVMVG (196 aa)). Positions 88-243 (PAAHLIGAPL…GKTFFGAVMV (156 aa)) constitute a THD domain. Asn222 carries N-linked (GlcNAc...) asparagine glycosylation.

The protein belongs to the tumor necrosis factor family. As to quaternary structure, heterotrimer of either two LTB and one LTA subunits or (less prevalent) two LTA and one LTB subunits.

The protein resides in the membrane. Cytokine that binds to LTBR/TNFRSF3. May play a specific role in immune response regulation. Provides the membrane anchor for the attachment of the heterotrimeric complex to the cell surface. The polypeptide is Lymphotoxin-beta (LTB) (Macaca mulatta (Rhesus macaque)).